The following is a 239-amino-acid chain: Glycerol-3-phosphate acyltransferase (239 aa).

6 consecutive transmembrane segments (helical) span residues 6-26 (AIALLIVFSLVIGYLMGSVMF), 61-81 (FLVGLCDALKGFLAFVFSFLI), 99-119 (YYLTYLSCFAATIGHIFPLYF), 135-155 (LAISLWWFVICLVLWLLVTLI), 159-179 (VSLASLVTFFILAIIILVPWL), and 199-219 (WYIILFFVLWYWPLTIAVFWL).

The protein belongs to the PlsY family. As to quaternary structure, probably interacts with PlsX.

It is found in the cell membrane. The catalysed reaction is an acyl phosphate + sn-glycerol 3-phosphate = a 1-acyl-sn-glycero-3-phosphate + phosphate. It functions in the pathway lipid metabolism; phospholipid metabolism. In terms of biological role, catalyzes the transfer of an acyl group from acyl-phosphate (acyl-PO(4)) to glycerol-3-phosphate (G3P) to form lysophosphatidic acid (LPA). This enzyme utilizes acyl-phosphate as fatty acyl donor, but not acyl-CoA or acyl-ACP. The protein is Glycerol-3-phosphate acyltransferase of Mycoplasma pneumoniae (strain ATCC 29342 / M129 / Subtype 1) (Mycoplasmoides pneumoniae).